We begin with the raw amino-acid sequence, 247 residues long: MSSSIEIFPDSDILVAAAGKRLVGAIGAAVAARGQALIVLTGGGNGIALLRYLSAQAQQIEWSKVHLFWGDERYVPEDDDERNLKQARRALLNHVDIPSNQVHPMAASDGDFGGDLDAAALAYEQVLAASAAPGDPAPNFDVHLLGMGPEGHINSLFPHSPAVLESTRMVVAVDDSPKPPPRRITLTLPAIQRSREVWLLVSGPGKADAVAAAIGGADPVSVPAAGAVGRQNTLWLLDRDAAAKLPS.

The protein belongs to the glucosamine/galactosamine-6-phosphate isomerase family. 6-phosphogluconolactonase subfamily.

The catalysed reaction is 6-phospho-D-glucono-1,5-lactone + H2O = 6-phospho-D-gluconate + H(+). The protein operates within carbohydrate degradation; pentose phosphate pathway; D-ribulose 5-phosphate from D-glucose 6-phosphate (oxidative stage): step 2/3. Functionally, hydrolysis of 6-phosphogluconolactone to 6-phosphogluconate. The protein is 6-phosphogluconolactonase (pgl) of Mycobacterium bovis (strain ATCC BAA-935 / AF2122/97).